The chain runs to 530 residues: Carbohydrate sulfotransferase 2 (530 aa).

Residues 1–54 (MSRSPQRALPPGALPRLLQAAPAAAPRALLPQWPRRPGRRWPASPLGMKVFRRK) are Cytoplasmic-facing. A helical; Signal-anchor for type II membrane protein membrane pass occupies residues 55 to 75 (ALVLCAGYALLLVLTMLNLLD). At 76–530 (YKWHKEPLQQ…SKTLLRKPRL (455 aa)) the chain is on the lumenal side. The segment at 89–119 (DGPLGAAAGAAGGSWGRPGPPPAGPPRAHAR) is disordered. 173 to 179 (WRSGSSF) contributes to the 3'-phosphoadenylyl sulfate binding site. Residue N243 is glycosylated (N-linked (GlcNAc...) asparagine). 3'-phosphoadenylyl sulfate is bound at residue 332–340 (RDPRAVASS). N-linked (GlcNAc...) asparagine glycans are attached at residues N457 and N475.

It belongs to the sulfotransferase 1 family. Gal/GlcNAc/GalNAc subfamily. As to quaternary structure, homodimer; disulfide-linked. Homodimerization is not essential for enzyme activity. Glycosylation at Asn-475 is required for catalytic activity. Widely expressed. Highly expressed in bone marrow, peripheral blood leukocytes, spleen, brain, spinal cord, ovary and placenta. Expressed by high endothelial cells (HEVs) and leukocytes.

Its subcellular location is the golgi apparatus. It localises to the trans-Golgi network membrane. It carries out the reaction 3-O-{N-acetyl-beta-D-glucosaminyl-(1-&gt;3)-beta-D-galactosyl-(1-&gt;3)-N-acetyl-alpha-D-galactosaminyl}-L-threonyl-[protein] + 3'-phosphoadenylyl sulfate = 3-O-{6-O-sulfo-N-acetyl-beta-D-glucosaminyl-(1-&gt;3)-beta-D-galactosyl-(1-&gt;3)-N-acetyl-alpha-D-galactosaminyl}-L-threonyl-[protein] + adenosine 3',5'-bisphosphate + H(+). It catalyses the reaction 3-O-{N-acetyl-beta-D-glucosaminyl-(1-&gt;3)-beta-D-galactosyl-(1-&gt;3)-N-acetyl-alpha-D-galactosaminyl}-L-seryl-[protein] + 3'-phosphoadenylyl sulfate = 3-O-{6-O-sulfo-N-acetyl-beta-D-glucosaminyl-(1-&gt;3)-beta-D-galactosyl-(1-&gt;3)-N-acetyl-alpha-D-galactosaminyl}-L-seryl-[protein] + adenosine 3',5'-bisphosphate + H(+). The catalysed reaction is a 3-O-{beta-D-galactosyl-(1-&gt;3)-[N-acetyl-beta-D-glucosaminyl-(1-&gt;6)]-N-acetyl-alpha-D-galactosaminyl}-L-threonyl-[protein] + 3'-phosphoadenylyl sulfate = 3-O-{beta-D-galactosyl-(1-&gt;3)-[6-O-sulfo-N-acetyl-beta-D-glucosaminyl-(1-&gt;6)]-N-acetyl-alpha-D-galactosaminyl}-L-threonyl-[protein] + adenosine 3',5'-bisphosphate + H(+). The enzyme catalyses 3-O-{beta-D-galactosyl-(1-&gt;3)-[N-acetyl-beta-D-glucosaminyl-(1-&gt;6)]-N-acetyl-alpha-D-galactosaminyl}-L-seryl-[protein] + 3'-phosphoadenylyl sulfate = 3-O-{beta-D-galactosyl-(1-&gt;3)-[6-O-sulfo-N-acetyl-beta-D-glucosaminyl-(1-&gt;6)]-N-acetyl-alpha-D-galactosaminyl}-L-seryl-[protein] + adenosine 3',5'-bisphosphate + H(+). It participates in protein modification; carbohydrate sulfation. In terms of biological role, sulfotransferase that utilizes 3'-phospho-5'-adenylyl sulfate (PAPS) as sulfonate donor to catalyze the transfer of sulfate to position 6 of non-reducing N-acetylglucosamine (GlcNAc) residues within keratan-like structures on N-linked glycans and within mucin-associated glycans that can ultimately serve as SELL ligands. SELL ligands are present in high endothelial cells (HEVs) and play a central role in lymphocyte homing at sites of inflammation. Participates in biosynthesis of the SELL ligand sialyl 6-sulfo Lewis X and in lymphocyte homing to Peyer patches. Has no activity toward O-linked sugars. Its substrate specificity may be influenced by its subcellular location. Sulfates GlcNAc residues at terminal, non-reducing ends of oligosaccharide chains. This is Carbohydrate sulfotransferase 2 (CHST2) from Homo sapiens (Human).